The following is a 948-amino-acid chain: MAQQYQPGQRWISDSEAELGLGTILAQDGRLLTVLYPATGDTRQYSLRNAPLTRVRFSPGDQITHFEGWKLTVREVEDIDGLMVYHGLDGQNQPRTLPETQLSNFIQFRLASDRLFAGQIDPLSWFSLRYNTLQHTSKQVQSSLWGLGGCRAQPIAHQLHIAREVADRSAPRVLLADEVGLGKTIEAGLVIHRQLLTGRANRVLILVPENLQHQWLVEMRRRFNLQVALFDAERFIESDASNPFEDAQLALVALEWLVEDEKAQDALFAAGWDLMVVDEAHHLVWHEDKASTEYSLVEQLAQVIPGVLLLTATPEQLGQDSHFARLRLLDPNRFHDLAAFRAESEHYRPVAEAVQELLDEGRLSPKAHATIQGFLGAEGEALLAAVSDGDSQASARLIRELLDRHGTGRVLFRNTRAAIQGFPERELHPYPLPMPEQYRDLPAGEHAELYPEVAFQAQGEVSDDERWWRFDPRVDWLIDTLKMLKRTKVLVICAHAETAMDLEDALRVRSGIPASVFHEGMSILERDRAAAYFADEEFGAQVLICSEIGSEGRNFQFAHHLVMFDLPAHPDLLEQRIGRLDRIGQKHVIQLHIPYLQEGPQERLFQWYHEALNAFLNTCPTGNALQHQFGPRLLPMLEGGDSKAWDALVAEAKGERERLEAELHSGRDRLLELNSGGAGEGQALVEDILEQDDQFALPIYMETLFDAFGIDSEDHSENALILKPSEKMLDASFPLGDDEGVTITYDRGQALSREDMQFLTWEHPMVQGGMDLVLSGSMGNTAVALIKNKALKPGTVLLELLFVSEVVAPRSLQLGRYLPPAALRCLLDANGNDLASRVAFETLNEQLESVPRASANKFVQAQRDVLAKRISGGEAKIMPTHVERVAEAQRRLAAEADEELARLTALKAVNPSVRDSEIDALRKQREDGLAMLEKAALRLEAIRVLVAG.

The 169-residue stretch at 164 to 332 (EVADRSAPRV…FARLRLLDPN (169 aa)) folds into the Helicase ATP-binding domain. An ATP-binding site is contributed by 177–184 (DEVGLGKT). Positions 278-281 (DEAH) match the DEAH box motif. The region spanning 473 to 627 (RVDWLIDTLK…TCPTGNALQH (155 aa)) is the Helicase C-terminal domain.

The protein belongs to the SNF2/RAD54 helicase family. RapA subfamily. In terms of assembly, interacts with the RNAP. Has a higher affinity for the core RNAP than for the holoenzyme. Its ATPase activity is stimulated by binding to RNAP.

Functionally, transcription regulator that activates transcription by stimulating RNA polymerase (RNAP) recycling in case of stress conditions such as supercoiled DNA or high salt concentrations. Probably acts by releasing the RNAP, when it is trapped or immobilized on tightly supercoiled DNA. Does not activate transcription on linear DNA. Probably not involved in DNA repair. The protein is RNA polymerase-associated protein RapA of Pseudomonas putida (strain W619).